The following is a 108-amino-acid chain: Urease subunit beta (108 aa).

Belongs to the urease beta subunit family. In terms of assembly, heterotrimer of UreA (gamma), UreB (beta) and UreC (alpha) subunits. Three heterotrimers associate to form the active enzyme.

The protein localises to the cytoplasm. It catalyses the reaction urea + 2 H2O + H(+) = hydrogencarbonate + 2 NH4(+). Its pathway is nitrogen metabolism; urea degradation; CO(2) and NH(3) from urea (urease route): step 1/1. The protein is Urease subunit beta of Proteus hauseri.